Here is a 510-residue protein sequence, read N- to C-terminus: 2,3-bisphosphoglycerate-independent phosphoglycerate mutase (510 aa).

D12 serves as a coordination point for Mn(2+). At Y36 the chain carries Phosphotyrosine. S62 is a binding site for Mn(2+). S62 (phosphoserine intermediate) is an active-site residue. Substrate contacts are provided by residues H123, R153–D154, R185, R191, R261–R264, and K336. 5 residues coordinate Mn(2+): D403, H407, D444, H445, and H462.

This sequence belongs to the BPG-independent phosphoglycerate mutase family. In terms of assembly, monomer. It depends on Mn(2+) as a cofactor.

The catalysed reaction is (2R)-2-phosphoglycerate = (2R)-3-phosphoglycerate. Its pathway is carbohydrate degradation; glycolysis; pyruvate from D-glyceraldehyde 3-phosphate: step 3/5. Essential for rapid growth and for sporulation. Catalyzes the interconversion of 2-phosphoglycerate and 3-phosphoglycerate. The sequence is that of 2,3-bisphosphoglycerate-independent phosphoglycerate mutase from Halalkalibacterium halodurans (strain ATCC BAA-125 / DSM 18197 / FERM 7344 / JCM 9153 / C-125) (Bacillus halodurans).